The primary structure comprises 334 residues: DNA polymerase beta (334 aa).

The K(+) site is built by K60, L62, and V65. Na(+)-binding residues include K60, L62, and V65. The active-site Nucleophile; Schiff-base intermediate with DNA; for 5'-dRP lyase activity is K72. R83 carries the omega-N-methylarginine; by PRMT6 modification. Residues T101, V103, and I106 each coordinate K(+). T101, V103, and I106 together coordinate Na(+). Residue R149 coordinates a 2'-deoxyribonucleoside 5'-triphosphate. Residue R152 is modified to Omega-N-methylarginine; by PRMT6. A 2'-deoxyribonucleoside 5'-triphosphate contacts are provided by S180, R183, G189, and D190. The interval 183-192 is DNA-binding; sequence RGAESSGDMD. Positions 190, 192, and 255 each coordinate Mg(2+).

This sequence belongs to the DNA polymerase type-X family. Monomer. It depends on Mg(2+) as a cofactor. In terms of processing, methylation by PRMT6 stimulates the polymerase activity by enhancing DNA binding and processivity. Post-translationally, ubiquitinated: monoubiquitinated by huwe1/arf-bp1. Monoubiquitinated protein is then the target of stub1/chip, which catalyzes polyubiquitination from monoubiquitin, leading to degradation by the proteasome. usp47 mediates the deubiquitination of monoubiquitinated protein, preventing polyubiquitination by STUB1/CHIP and its subsequent degradation.

Its subcellular location is the nucleus. It is found in the cytoplasm. The catalysed reaction is DNA(n) + a 2'-deoxyribonucleoside 5'-triphosphate = DNA(n+1) + diphosphate. The enzyme catalyses a 5'-end 2'-deoxyribose-2'-deoxyribonucleotide-DNA = (2E,4S)-4-hydroxypenten-2-al-5-phosphate + a 5'-end 5'-phospho-2'-deoxyribonucleoside-DNA + H(+). It carries out the reaction 2'-deoxyribonucleotide-(2'-deoxyribose 5'-phosphate)-2'-deoxyribonucleotide-DNA = a 3'-end 2'-deoxyribonucleotide-(2,3-dehydro-2,3-deoxyribose 5'-phosphate)-DNA + a 5'-end 5'-phospho-2'-deoxyribonucleoside-DNA + H(+). Repair polymerase that plays a key role in base-excision repair. During this process, the damaged base is excised by specific DNA glycosylases, the DNA backbone is nicked at the abasic site by an apurinic/apyrimidic (AP) endonuclease, and POLB removes 5'-deoxyribose-phosphate from the preincised AP site acting as a 5'-deoxyribose-phosphate lyase (5'-dRP lyase); through its DNA polymerase activity, it adds one nucleotide to the 3' end of the arising single-nucleotide gap. Conducts 'gap-filling' DNA synthesis in a stepwise distributive fashion rather than in a processive fashion as for other DNA polymerases. It is also able to cleave sugar-phosphate bonds 3' to an intact AP site, acting as an AP lyase. The polypeptide is DNA polymerase beta (polb) (Xenopus laevis (African clawed frog)).